Consider the following 359-residue polypeptide: Lachesin (359 aa).

The first 25 residues, 1 to 25 (MWRPSISNCVWSTLLLAIFVQQTLA), serve as a signal peptide directing secretion. Positions 29–130 (PTISYITQEQ…HKVSAEVKLS (102 aa)) constitute an Ig-like V-type domain. A disulfide bridge links Cys50 with Cys113. N-linked (GlcNAc...) asparagine glycans are attached at residues Asn92 and Asn140. Ig-like C2-type domains lie at 135 to 221 (PVIS…INVE) and 226 to 317 (PVIT…ARVN). 2 disulfide bridges follow: Cys157-Cys204 and Cys247-Cys303. The GPI-anchor amidated alanine moiety is linked to residue Ala336. Residues 337 to 359 (GAEDVSATSFALVGILAALLFAR) constitute a propeptide, removed in mature form.

Expressed on differentiating neuronal cells from the onset of neurogenesis in both the central and peripheral nervous systems. First detected in the cellularized blastoderm, apart from in the ventral side. Expression persists uniformly in the early ectoderm until the end of gastrulation. From stage 10, expressed in an alternating strong/weak pattern in each segment until stage 15 when it disappears. From stage 11, expressed in subsets of neurons and later subsets of glial cells. From early stage 13, strongly expressed in trachea, hindgut, foregut and the nervous system.

It localises to the cell membrane. Required for normal tracheal development and maintenance of the trans-epithelial diffusion barrier. Functions as a homophilic cell-adhesion molecule. May play a role in early neuronal differentiation and axon outgrowth. The polypeptide is Lachesin (Lac) (Drosophila melanogaster (Fruit fly)).